The chain runs to 123 residues: Large ribosomal subunit protein uL18 (123 aa).

It belongs to the universal ribosomal protein uL18 family. As to quaternary structure, part of the 50S ribosomal subunit; part of the 5S rRNA/L5/L18/L25 subcomplex. Contacts the 5S and 23S rRNAs.

Its function is as follows. This is one of the proteins that bind and probably mediate the attachment of the 5S RNA into the large ribosomal subunit, where it forms part of the central protuberance. The protein is Large ribosomal subunit protein uL18 of Bifidobacterium longum (strain DJO10A).